The primary structure comprises 296 residues: MIGSFLTRGLVMVLGYAYPAYECYKTVEKNRPEIEQLRFWCQYWILVACLTVFERVGDAFVSWVPMYSEAKLAFFIYLWYPKTRGTTYVYESFFRPYLSQHENDIDHSLLELRTRAGDMAVIYWQRVASYGQTRILEILQYVAAQSTPRPQPPQKRGGRANQAPAKPKKAPVPQSEPEEVSLSSSSSSSSSENEGNEPTRKVSGPSRPRPTVTSVPAADPKNAGTTQIAQKSVASPIVNPPQSTTQVEPMQIEEVEGEAESGNENPNPEGPKETVMEETIRMTRGRLRKTRSEESR.

Residues 146 to 296 are disordered; that stretch reads STPRPQPPQK…LRKTRSEESR (151 aa). A compositionally biased stretch (low complexity) spans 180–193; the sequence is VSLSSSSSSSSSEN. Polar residues predominate over residues 223-233; that stretch reads AGTTQIAQKSV. Positions 251-261 are enriched in acidic residues; the sequence is QIEEVEGEAES. Positions 270–281 are enriched in basic and acidic residues; that stretch reads GPKETVMEETIR.

It belongs to the DP1 family.

The chain is HVA22-like protein i (HVA22I) from Arabidopsis thaliana (Mouse-ear cress).